We begin with the raw amino-acid sequence, 213 residues long: Tellurium resistance protein TerX (213 aa).

It belongs to the CAPAB/TerDEXZ family.

In terms of biological role, not known; seems to contribute to the tellurium resistance (Ter) mechanism. Also involved in phage inhibition (Phi) and colicin resistance (PacB). In Serratia marcescens, this protein is Tellurium resistance protein TerX (terX).